Consider the following 48-residue polypeptide: SDCTLRNHDCTDDRHSCCRSKMFKDVCKCFYPSQAKKELCTCQQDKHL.

4 cysteine pairs are disulfide-bonded: C3-C18, C10-C27, C17-C42, and C29-C40.

This sequence belongs to the neurotoxin 19 (CSTX) family. 12 subfamily. In terms of assembly, heterodimer of A and B chains; disulfide-linked. Post-translationally, contains 4 disulfide bonds. In terms of tissue distribution, expressed by the venom gland.

Its subcellular location is the secreted. In Cupiennius salei (American wandering spider), this protein is Toxin CSTX-14.